Consider the following 475-residue polypeptide: Ribulose bisphosphate carboxylase large chain (475 aa).

Residues Met1–Ser2 constitute a propeptide that is removed on maturation. Pro3 is subject to N-acetylproline. An N6,N6,N6-trimethyllysine modification is found at Lys14. Positions 123 and 173 each coordinate substrate. Lys175 acts as the Proton acceptor in catalysis. Lys177 is a substrate binding site. Positions 201, 203, and 204 each coordinate Mg(2+). Position 201 is an N6-carboxylysine (Lys201). His294 serves as the catalytic Proton acceptor. 3 residues coordinate substrate: Arg295, His327, and Ser379.

This sequence belongs to the RuBisCO large chain family. Type I subfamily. In terms of assembly, heterohexadecamer of 8 large chains and 8 small chains; disulfide-linked. The disulfide link is formed within the large subunit homodimers. The cofactor is Mg(2+). The disulfide bond which can form in the large chain dimeric partners within the hexadecamer appears to be associated with oxidative stress and protein turnover.

It localises to the plastid. The protein resides in the chloroplast. The enzyme catalyses 2 (2R)-3-phosphoglycerate + 2 H(+) = D-ribulose 1,5-bisphosphate + CO2 + H2O. The catalysed reaction is D-ribulose 1,5-bisphosphate + O2 = 2-phosphoglycolate + (2R)-3-phosphoglycerate + 2 H(+). Functionally, ruBisCO catalyzes two reactions: the carboxylation of D-ribulose 1,5-bisphosphate, the primary event in carbon dioxide fixation, as well as the oxidative fragmentation of the pentose substrate in the photorespiration process. Both reactions occur simultaneously and in competition at the same active site. This is Ribulose bisphosphate carboxylase large chain from Platanus occidentalis (Sycamore).